Here is a 550-residue protein sequence, read N- to C-terminus: U-box domain-containing protein 40 (550 aa).

The segment covering 19–29 has biased composition (basic and acidic residues); that stretch reads KSDNLSRRESL. The tract at residues 19 to 55 is disordered; sequence KSDNLSRRESLAGKSKWRTSLSRSSSSSSSNNNSPTK. The span at 38-52 shows a compositional bias: low complexity; sequence SLSRSSSSSSSNNNS. The U-box domain occupies 57–127; the sequence is EIPAEFLCPI…HSWCERRCFP (71 aa). ARM repeat units lie at residues 260–299, 301–340, 342–381, 383–420, and 422–464; these read ESSRISLCTTRVISALKSLIVSRYATVQVNVTAVLVNLSL, KSNKVKIVRSGIVPPLIDVLKCGSVEAQEHSAGVIFSLAL, DENKTAIGVLGGLEPLLHLIRVGTELTRHDSALALYHLSL, QSNRGKLVKLGAVQMLLGMVSLGQMIGRVLLILCNMAS, and PVSR…GLSH.

It catalyses the reaction S-ubiquitinyl-[E2 ubiquitin-conjugating enzyme]-L-cysteine + [acceptor protein]-L-lysine = [E2 ubiquitin-conjugating enzyme]-L-cysteine + N(6)-ubiquitinyl-[acceptor protein]-L-lysine.. Its pathway is protein modification; protein ubiquitination. In terms of biological role, functions as an E3 ubiquitin ligase. This chain is U-box domain-containing protein 40 (PUB40), found in Arabidopsis thaliana (Mouse-ear cress).